The chain runs to 837 residues: Protein kintoun (837 aa).

4 disordered regions span residues 100 to 119 (APSS…GSHW), 205 to 224 (LPGV…LPDF), 230 to 249 (YPAA…LQPA), and 363 to 515 (AAAP…GPGT). The span at 233–242 (APGPRAPSPP) shows a compositional bias: pro residues. Positions 428 to 442 (GEERVPKPGEQDLSR) are enriched in basic and acidic residues. The segment covering 445–459 (GSPPGSVEEPSPGGE) has biased composition (low complexity). 2 positions are modified to phosphoserine: serine 461 and serine 467. Basic and acidic residues predominate over residues 484-498 (ESARGDSSVETREES). Phosphoserine occurs at positions 640, 641, and 773.

It belongs to the PIH1 family. Kintoun subfamily. Interacts with CFAP300. Interacts with DNAAF4. Interacts with DNAAF6/PIH1D3. Interacts with DNAI2 and HSPA1A.

The protein localises to the cytoplasm. It localises to the dynein axonemal particle. In terms of biological role, required for cytoplasmic pre-assembly of axonemal dyneins, thereby playing a central role in motility in cilia and flagella. Involved in pre-assembly of dynein arm complexes in the cytoplasm before intraflagellar transport loads them for the ciliary compartment. This is Protein kintoun from Homo sapiens (Human).